We begin with the raw amino-acid sequence, 362 residues long: 2-aminoethylphosphonate--pyruvate transaminase (362 aa).

The residue at position 193 (lysine 193) is an N6-(pyridoxal phosphate)lysine.

Belongs to the class-V pyridoxal-phosphate-dependent aminotransferase family. PhnW subfamily. As to quaternary structure, homodimer. Requires pyridoxal 5'-phosphate as cofactor.

The enzyme catalyses (2-aminoethyl)phosphonate + pyruvate = phosphonoacetaldehyde + L-alanine. Involved in phosphonate degradation. The chain is 2-aminoethylphosphonate--pyruvate transaminase from Phocaeicola vulgatus (strain ATCC 8482 / DSM 1447 / JCM 5826 / CCUG 4940 / NBRC 14291 / NCTC 11154) (Bacteroides vulgatus).